A 236-amino-acid polypeptide reads, in one-letter code: MSKYSVLLPTYNERKNLPIITYLIAKTFDQEKLDWEIVIIDDASPDGTQEVAKELQKIYGEDKILLKPRSGKLGLGTAYIHGLKFATGDFVIIMDADFSHHPKYLPEFIKLQKEHNYDIVLGTRYAKDGGVYGWNLKRKFISRGANLLASTVLGTGVSDVTGSFRLYKKPVLETLMSEVTSKGYVFQMEIIARAREHNYTIGEVPIAFVDRLYGESKLGMDDILGYLKGVFSLLFI.

Residues P9, Y11, E13, I40, D42, D95, A96, D97, R124, V160, R211, and K217 each coordinate GDP-alpha-D-mannose. D97 serves as a coordination point for Mg(2+). A Mn(2+)-binding site is contributed by D97.

It belongs to the glycosyltransferase 2 family. In terms of assembly, component of the dolichol-phosphate mannose (DPM) synthase complex composed of dpm1, dpm2 and dpm3. Mg(2+) is required as a cofactor. Mn(2+) serves as cofactor. It depends on Ca(2+) as a cofactor.

The protein resides in the endoplasmic reticulum. The catalysed reaction is a di-trans,poly-cis-dolichyl phosphate + GDP-alpha-D-mannose = a di-trans,poly-cis-dolichyl beta-D-mannosyl phosphate + GDP. The protein operates within protein modification; protein glycosylation. In terms of biological role, transfers mannose from GDP-mannose to dolichol monophosphate to form dolichol phosphate mannose (Dol-P-Man) which is the mannosyl donor in pathways leading to N-glycosylation, glycosyl phosphatidylinositol membrane anchoring, and O-mannosylation of proteins. In Schizosaccharomyces pombe (strain 972 / ATCC 24843) (Fission yeast), this protein is Dolichol-phosphate mannosyltransferase.